We begin with the raw amino-acid sequence, 353 residues long: Divinyl chlorophyll a/b light-harvesting protein PcbG (353 aa).

Helical transmembrane passes span 28 to 48 (FISS…ANTL), 64 to 84 (GLVV…NGVF), 90 to 110 (LLVV…GGML), 204 to 224 (IMGG…FHIL), 244 to 264 (FVLS…ALWC), and 308 to 328 (LTNV…FHGL).

The protein belongs to the PsbB/PsbC family. IsiA/Pcb subfamily. The antenna complex consists of divinyl chlorophylls (a and b) and divinyl chlorophyll a/b binding proteins and binds more divinyl chlorophyll b than does the antenna complex from high-light-adapted Prochlorococcus. Also forms complexes with PSI, consisting of a PSI trimer with surrounded by a PcbG ring (probably with 18 subunits). Is the only subunit found in this ring under iron-replete conditions. Requires divinyl chlorophyll a as cofactor. Divinyl chlorophyll b is required as a cofactor.

It localises to the cellular thylakoid membrane. In terms of biological role, the antenna complex functions as a light receptor, it captures and delivers excitation energy to photosystems I. The Prochlorales pcb genes are not related to higher plant LHCs. In Prochlorococcus marinus (strain SARG / CCMP1375 / SS120), this protein is Divinyl chlorophyll a/b light-harvesting protein PcbG (pcbG).